Here is a 213-residue protein sequence, read N- to C-terminus: Thiamine-phosphate synthase (213 aa).

4-amino-2-methyl-5-(diphosphooxymethyl)pyrimidine contacts are provided by residues 40–44 and N75; that span reads QFREK. D76 and D95 together coordinate Mg(2+). Residue S113 participates in 4-amino-2-methyl-5-(diphosphooxymethyl)pyrimidine binding. Residue 139–141 coordinates 2-[(2R,5Z)-2-carboxy-4-methylthiazol-5(2H)-ylidene]ethyl phosphate; that stretch reads TPS. K142 is a 4-amino-2-methyl-5-(diphosphooxymethyl)pyrimidine binding site. Residues G171 and 191 to 192 contribute to the 2-[(2R,5Z)-2-carboxy-4-methylthiazol-5(2H)-ylidene]ethyl phosphate site; that span reads IS.

The protein belongs to the thiamine-phosphate synthase family. Mg(2+) is required as a cofactor.

It catalyses the reaction 2-[(2R,5Z)-2-carboxy-4-methylthiazol-5(2H)-ylidene]ethyl phosphate + 4-amino-2-methyl-5-(diphosphooxymethyl)pyrimidine + 2 H(+) = thiamine phosphate + CO2 + diphosphate. The catalysed reaction is 2-(2-carboxy-4-methylthiazol-5-yl)ethyl phosphate + 4-amino-2-methyl-5-(diphosphooxymethyl)pyrimidine + 2 H(+) = thiamine phosphate + CO2 + diphosphate. It carries out the reaction 4-methyl-5-(2-phosphooxyethyl)-thiazole + 4-amino-2-methyl-5-(diphosphooxymethyl)pyrimidine + H(+) = thiamine phosphate + diphosphate. The protein operates within cofactor biosynthesis; thiamine diphosphate biosynthesis; thiamine phosphate from 4-amino-2-methyl-5-diphosphomethylpyrimidine and 4-methyl-5-(2-phosphoethyl)-thiazole: step 1/1. Functionally, condenses 4-methyl-5-(beta-hydroxyethyl)thiazole monophosphate (THZ-P) and 2-methyl-4-amino-5-hydroxymethyl pyrimidine pyrophosphate (HMP-PP) to form thiamine monophosphate (TMP). In Staphylococcus aureus (strain bovine RF122 / ET3-1), this protein is Thiamine-phosphate synthase.